The primary structure comprises 1158 residues: ATP-dependent helicase/deoxyribonuclease subunit B (1158 aa).

An ATP-binding site is contributed by 8-15; sequence GRAGTGKS. [4Fe-4S] cluster-binding residues include Cys791, Cys1112, Cys1115, and Cys1121.

This sequence belongs to the helicase family. AddB/RexB type 1 subfamily. As to quaternary structure, heterodimer of AddA and AddB. Mg(2+) is required as a cofactor. [4Fe-4S] cluster serves as cofactor.

Functionally, the heterodimer acts as both an ATP-dependent DNA helicase and an ATP-dependent, dual-direction single-stranded exonuclease. Recognizes the chi site generating a DNA molecule suitable for the initiation of homologous recombination. The AddB subunit has 5' -&gt; 3' nuclease activity but not helicase activity. This chain is ATP-dependent helicase/deoxyribonuclease subunit B, found in Clostridium perfringens (strain ATCC 13124 / DSM 756 / JCM 1290 / NCIMB 6125 / NCTC 8237 / Type A).